The chain runs to 538 residues: DALR anticodon-binding domain-containing protein 3 (538 aa).

In terms of assembly, part of a complex containing tRNA(Arg) and METTL2. Interacts with tRNA(Arg)(CCU) and tRNA(Arg)(UCU). Interacts with METTL2.

Functionally, involved in tRNA methylation. Facilitates the recognition and targeting of tRNA(Arg)(CCU) and tRNA(Arg)(UCU) substrates for N(3)-methylcytidine modification by METTL2. The chain is DALR anticodon-binding domain-containing protein 3 (Dalrd3) from Mus musculus (Mouse).